A 331-amino-acid polypeptide reads, in one-letter code: Isopentenyl-diphosphate delta-isomerase (331 aa).

Residue 4 to 5 (RK) coordinates substrate. FMN is bound by residues 59–61 (AMT), Ser89, and Asn116. Gln146 serves as a coordination point for substrate. Residue Glu147 participates in Mg(2+) binding. FMN is bound by residues Lys178, Ser203, Thr208, 252–254 (GIR), and 273–274 (SR).

It belongs to the IPP isomerase type 2 family. Homooctamer. Dimer of tetramers. The cofactor is FMN. It depends on NADPH as a cofactor. Mg(2+) is required as a cofactor.

It localises to the cytoplasm. It carries out the reaction isopentenyl diphosphate = dimethylallyl diphosphate. Functionally, involved in the biosynthesis of isoprenoids. Catalyzes the 1,3-allylic rearrangement of the homoallylic substrate isopentenyl (IPP) to its allylic isomer, dimethylallyl diphosphate (DMAPP). This is Isopentenyl-diphosphate delta-isomerase from Streptococcus mutans serotype c (strain ATCC 700610 / UA159).